Reading from the N-terminus, the 204-residue chain is Holliday junction branch migration complex subunit RuvA (204 aa).

The segment at 1 to 64 (MIGRLRGTLI…EDAQLLYGFN (64 aa)) is domain I. The interval 65 to 143 (TVSERALFRE…GWGAGDLFTP (79 aa)) is domain II. A flexible linker region spans residues 144 to 155 (ATDAAPVDSTPV). The tract at residues 156 to 204 (IAQNAQEEAMSALLALGYKPPQASKAVSQVAKAGMSSEELIREALKSMV) is domain III.

It belongs to the RuvA family. Homotetramer. Forms an RuvA(8)-RuvB(12)-Holliday junction (HJ) complex. HJ DNA is sandwiched between 2 RuvA tetramers; dsDNA enters through RuvA and exits via RuvB. An RuvB hexamer assembles on each DNA strand where it exits the tetramer. Each RuvB hexamer is contacted by two RuvA subunits (via domain III) on 2 adjacent RuvB subunits; this complex drives branch migration. In the full resolvosome a probable DNA-RuvA(4)-RuvB(12)-RuvC(2) complex forms which resolves the HJ.

The protein localises to the cytoplasm. In terms of biological role, the RuvA-RuvB-RuvC complex processes Holliday junction (HJ) DNA during genetic recombination and DNA repair, while the RuvA-RuvB complex plays an important role in the rescue of blocked DNA replication forks via replication fork reversal (RFR). RuvA specifically binds to HJ cruciform DNA, conferring on it an open structure. The RuvB hexamer acts as an ATP-dependent pump, pulling dsDNA into and through the RuvAB complex. HJ branch migration allows RuvC to scan DNA until it finds its consensus sequence, where it cleaves and resolves the cruciform DNA. The chain is Holliday junction branch migration complex subunit RuvA from Vibrio cholerae serotype O1 (strain ATCC 39541 / Classical Ogawa 395 / O395).